Reading from the N-terminus, the 101-residue chain is Feather keratin Cos1-1/Cos1-3/Cos2-1 (101 aa).

S2 is modified (N-acetylserine).

It belongs to the avian keratin family. As to quaternary structure, the avian keratins (F-ker, S-ker, C-ker and B-ker) are a complex mixture of very similar polypeptides.

The polypeptide is Feather keratin Cos1-1/Cos1-3/Cos2-1 (Columba livia (Rock dove)).